The primary structure comprises 236 residues: tRNA1(Val) (adenine(37)-N6)-methyltransferase (236 aa).

The protein belongs to the methyltransferase superfamily. tRNA (adenine-N(6)-)-methyltransferase family.

It localises to the cytoplasm. It carries out the reaction adenosine(37) in tRNA1(Val) + S-adenosyl-L-methionine = N(6)-methyladenosine(37) in tRNA1(Val) + S-adenosyl-L-homocysteine + H(+). Functionally, specifically methylates the adenine in position 37 of tRNA(1)(Val) (anticodon cmo5UAC). This chain is tRNA1(Val) (adenine(37)-N6)-methyltransferase, found in Actinobacillus pleuropneumoniae serotype 7 (strain AP76).